The primary structure comprises 100 residues: Replication restart protein PriB (100 aa).

The 99-residue stretch at 1 to 99 (MGFNNLVSLA…LRIQNIKEYK (99 aa)) folds into the SSB domain.

Belongs to the PriB family. Homodimer. Interacts with PriA and DnaT. Component of the replication restart primosome. Primosome assembly occurs via a 'hand-off' mechanism. PriA binds to replication forks, subsequently PriB then DnaT bind; DnaT then displaces ssDNA to generate the helicase loading substrate.

In terms of biological role, involved in the restart of stalled replication forks, which reloads the replicative helicase on sites other than the origin of replication; the PriA-PriB pathway is the major replication restart pathway. During primosome assembly it facilitates complex formation between PriA and DnaT on DNA; stabilizes PriA on DNA. Stimulates the DNA unwinding activity of PriA helicase. The sequence is that of Replication restart protein PriB from Neisseria meningitidis serogroup C (strain 053442).